Consider the following 395-residue polypeptide: RNA polymerase II elongation factor ELL3 (395 aa).

Disordered regions lie at residues 129–177 (LTEG…SEPM) and 189–281 (PSRE…SPEE). Ser-242 carries the post-translational modification Phosphoserine. Residues 243–260 (QEGEDWGQDEDEEGDEDG) show a composition bias toward acidic residues. Low complexity predominate over residues 269-279 (SAPSASESPSP). Residues 283-393 (PDYLLQYRAI…LILEFEEKNR (111 aa)) form the OCEL domain.

Belongs to the ELL/occludin family. Component of the little elongation complex (LEC), at least composed of ELL (ELL, ELL2 or ELL3), ZC3H8, ICE1 and ICE2. Component of the super elongation complex (SEC), at least composed of EAF1, EAF2, CDK9, MLLT3/AF9, AFF (AFF1 or AFF4), the P-TEFb complex and ELL (ELL, ELL2 or ELL3). Interacts with AFF4. As to expression, actively expressed in embryonic stem cells (ES cells), while it is weakly expressed in differentiated cells.

It is found in the nucleus. In terms of biological role, enhancer-binding elongation factor that specifically binds enhancers in embryonic stem cells (ES cells), marks them, and is required for their future activation during stem cell specification. Elongation factor component of the super elongation complex (SEC), a complex required to increase the catalytic rate of RNA polymerase II transcription by suppressing transient pausing by the polymerase at multiple sites along the DNA. Component of the little elongation complex (LEC), a complex required to regulate small nuclear RNA (snRNA) gene transcription by RNA polymerase II and III. Does not only bind to enhancer regions of active genes, but also marks the enhancers that are in a poised or inactive state in ES cells and is required for establishing proper RNA polymerase II occupancy at developmentally regulated genes in a cohesin-dependent manner. Probably required for priming developmentally regulated genes for later recruitment of the super elongation complex (SEC), for transcriptional activation during differentiation. Required for recruitment of P-TEFb within SEC during differentiation. Probably preloaded on germ cell chromatin, suggesting that it may prime gene activation by marking enhancers as early as in the germ cells. Promoting epithelial-mesenchymal transition (EMT). In Mus musculus (Mouse), this protein is RNA polymerase II elongation factor ELL3 (Ell3).